We begin with the raw amino-acid sequence, 388 residues long: Endoglucanase 3 (388 aa).

The signal sequence occupies residues 1–16 (MKHSVLAGLFATGALA). The 36-residue stretch at 17–52 (QGGAWQQCGGVGFSGSTSCVSGYTCVYLNDWYSQCQ) folds into the CBM1 domain. 2 disulfide bridges follow: Cys24–Cys41 and Cys35–Cys51. A linker region spans residues 53–91 (PQPTTLRTTTTPGATSTTRSAPAATSTTPAKGKFKWFGI). The segment at 56 to 81 (TTLRTTTTPGATSTTRSAPAATSTTP) is disordered. 2 N-linked (GlcNAc...) asparagine glycosylation sites follow: Asn92 and Asn155. A catalytic region spans residues 92 to 388 (NQSCAEFGKG…YNSLLKKYVP (297 aa)). Glu215 functions as the Proton donor in the catalytic mechanism. A glycan (N-linked (GlcNAc...) asparagine) is linked at Asn259. Residue Glu322 is the Nucleophile of the active site.

It belongs to the glycosyl hydrolase 5 (cellulase A) family.

It catalyses the reaction Endohydrolysis of (1-&gt;4)-beta-D-glucosidic linkages in cellulose, lichenin and cereal beta-D-glucans.. The protein is Endoglucanase 3 (CMC3) of Humicola insolens (Soft-rot fungus).